An 84-amino-acid polypeptide reads, in one-letter code: Large ribosomal subunit protein bL31B (84 aa).

This sequence belongs to the bacterial ribosomal protein bL31 family. Type B subfamily. In terms of assembly, part of the 50S ribosomal subunit.

This chain is Large ribosomal subunit protein bL31B, found in Bacteroides thetaiotaomicron (strain ATCC 29148 / DSM 2079 / JCM 5827 / CCUG 10774 / NCTC 10582 / VPI-5482 / E50).